A 623-amino-acid polypeptide reads, in one-letter code: Leucine aminopeptidase 2 (623 aa).

A peptide-binding positions include 140-142 (QLE) and 266-271 (PYGGME). A Zn(2+)-binding site is contributed by His-295. The active-site Proton acceptor is the Glu-296. The Zn(2+) site is built by His-299 and Glu-318. The Proton donor role is filled by Tyr-382.

This sequence belongs to the peptidase M1 family. Zn(2+) serves as cofactor.

Its subcellular location is the cytoplasm. It localises to the nucleus. The catalysed reaction is an epoxide + H2O = an ethanediol. Its function is as follows. Aminopeptidase that preferentially cleaves di- and tripeptides. Also has low epoxide hydrolase activity (in vitro). Can hydrolyze the epoxide leukotriene LTA(4) but it forms preferentially 5,6-dihydroxy-7,9,11,14-eicosatetraenoic acid rather than the cytokine leukotriene B(4) as the product compared to the homologous mammalian enzyme (in vitro). This Eremothecium gossypii (strain ATCC 10895 / CBS 109.51 / FGSC 9923 / NRRL Y-1056) (Yeast) protein is Leucine aminopeptidase 2.